Consider the following 49-residue polypeptide: Large ribosomal subunit protein bL36 (49 aa).

It belongs to the bacterial ribosomal protein bL36 family.

This is Large ribosomal subunit protein bL36 from Pseudomonas fluorescens (strain ATCC BAA-477 / NRRL B-23932 / Pf-5).